We begin with the raw amino-acid sequence, 1358 residues long: Tenascin-R (1358 aa).

Positions 1–31 (MGADGETVVLKNMLIGINLILLGSMIKPSEC) are cleaved as a signal peptide. 2 O-linked (GalNAc...) threonine glycosylation sites follow: threonine 36 and threonine 37. An N-linked (GlcNAc...) asparagine glycan is attached at asparagine 55. The stretch at 127–157 (CASSAQVLQELLSRIEMLEREVSVLRDQCNA) forms a coiled coil. O-linked (Xyl...) (chondroitin sulfate) serine glycosylation is present at serine 176. Asparagine 180 and asparagine 198 each carry an N-linked (GlcNAc...) asparagine glycan. EGF-like domains lie at 188 to 199 (CICNEGWFGKNC), 219 to 230 (CICDSEYSGDDC), and 250 to 261 (CVCEEPYTGEDC). Serine 271 is a glycosylation site (O-linked (Xyl...) (chondroitin sulfate) serine). N-linked (GlcNAc...) asparagine glycosylation occurs at asparagine 278. One can recognise an EGF-like 4 domain in the interval 281–292 (CLCEEGYVGEDC). Disulfide bonds link cysteine 292–cysteine 301, cysteine 297–cysteine 312, and cysteine 314–cysteine 323. Serine 302 is a glycosylation site (O-linked (Xyl...) (chondroitin sulfate) serine). One can recognise an EGF-like 5 domain in the interval 312–323 (CVCEEGYQGPDC). Fibronectin type-III domains lie at 328–420 (PPED…TPQG), 421–505 (LQFK…TVID), 506–595 (GPTQ…TEID), 596–687 (APKN…TELD), 688–777 (SPRD…FRPI), 778–865 (SHLH…TGID), 866–955 (PPKD…AMDN), 956–1042 (PVDL…TLLD), and 1043–1130 (PPAN…TGGR). Residues asparagine 392, asparagine 470, and asparagine 581 are each glycosylated (N-linked (GlcNAc...) asparagine). Serine 724 is subject to Phosphoserine. N-linked (GlcNAc...) asparagine glycosylation is found at asparagine 791, asparagine 874, asparagine 1036, asparagine 1046, and asparagine 1261. A Fibrinogen C-terminal domain is found at 1129 to 1344 (GRVFPHPQDC…FVEMKMRPYN (216 aa)).

The protein belongs to the tenascin family. In terms of assembly, forms oligomers. Interacts with CNTN1, TNC, and FN1. Interacts with BCAN and ACAN in a calcium-dependent manner. Interacts with SCN2B, PTPRZ1, and CSPG3. Post-translationally, contains N-linked oligosaccharides, O-linked sialylated structures and O-linked chondroitin sulfate glycosaminoglycans. Contains N-linked oligosaccharides with a sulfated carbohydrate structure. O-glycosylated on Thr-36 or Thr-37 with a core 1 or possibly core 8 glycan. Brain specific.

Its subcellular location is the secreted. It localises to the extracellular space. The protein localises to the extracellular matrix. Neural extracellular matrix (ECM) protein involved in interactions with different cells and matrix components. These interactions can influence cellular behavior by either evoking a stable adhesion and differentiation, or repulsion and inhibition of neurite growth. Binding to cell surface gangliosides inhibits RGD-dependent integrin-mediated cell adhesion and results in an inhibition of PTK2/FAK1 (FAK) phosphorylation and cell detachment. Binding to membrane surface sulfatides results in a oligodendrocyte adhesion and differentiation. Interaction with CNTN1 induces a repulsion of neurons and an inhibition of neurite outgrowth. Interacts with SCN2B may play a crucial role in clustering and regulation of activity of sodium channels at nodes of Ranvier. TNR-linked chondroitin sulfate glycosaminoglycans are involved in the interaction with FN1 and mediate inhibition of cell adhesion and neurite outgrowth. The highly regulated addition of sulfated carbohydrate structure may modulate the adhesive properties of TNR over the course of development and during synapse maintenance. This is Tenascin-R (TNR) from Homo sapiens (Human).